The primary structure comprises 263 residues: Acetylglutamate kinase (263 aa).

Residues 49 to 50, R71, and N163 each bind substrate; that span reads GG.

Belongs to the acetylglutamate kinase family. ArgB subfamily.

It localises to the cytoplasm. It carries out the reaction N-acetyl-L-glutamate + ATP = N-acetyl-L-glutamyl 5-phosphate + ADP. It functions in the pathway amino-acid biosynthesis; L-arginine biosynthesis; N(2)-acetyl-L-ornithine from L-glutamate: step 2/4. Its function is as follows. Catalyzes the ATP-dependent phosphorylation of N-acetyl-L-glutamate. In Moritella abyssi, this protein is Acetylglutamate kinase.